The following is a 689-amino-acid chain: Glycine--tRNA ligase beta subunit (689 aa).

Belongs to the class-II aminoacyl-tRNA synthetase family. Tetramer of two alpha and two beta subunits.

Its subcellular location is the cytoplasm. The enzyme catalyses tRNA(Gly) + glycine + ATP = glycyl-tRNA(Gly) + AMP + diphosphate. The polypeptide is Glycine--tRNA ligase beta subunit (Salmonella typhi).